Reading from the N-terminus, the 332-residue chain is UPF0158 protein TC_0713 (332 aa).

2 disordered regions span residues 196–215 (ALNPRPKRGRPPKQSAKVEA) and 291–332 (LGYD…KARS). Residues 295 to 316 (GDGDASDFFGEEYDDDDDDDDD) are compositionally biased toward acidic residues. The segment covering 320-332 (KKAAKRGRKKARS) has biased composition (basic residues).

It belongs to the UPF0158 family.

The chain is UPF0158 protein TC_0713 from Chlamydia muridarum (strain MoPn / Nigg).